Here is a 177-residue protein sequence, read N- to C-terminus: MSRVAKAPVVLLAGVEVKLNGQEITVKGPKGELALVAHNAVVLTQEENTITFGPREGFDKAWAQAGTVRALVNNMVVGVTEGFTKKLTLKGVGYRANVAGNTVNLTLGFSHPVAHELPTGVKAECPSQTEIVLTGTDKQVIGQVAADIRAYRSPEPYKGKGVRYADEVVRTKEAKKK.

Belongs to the universal ribosomal protein uL6 family. As to quaternary structure, part of the 50S ribosomal subunit.

This protein binds to the 23S rRNA, and is important in its secondary structure. It is located near the subunit interface in the base of the L7/L12 stalk, and near the tRNA binding site of the peptidyltransferase center. This chain is Large ribosomal subunit protein uL6, found in Photobacterium profundum (strain SS9).